The primary structure comprises 136 residues: uncharacterized protein (136 aa).

This is an uncharacterized protein from Bacillus anthracis.